A 54-amino-acid polypeptide reads, in one-letter code: RKHKNLKPFQCDKCSYSCVNKSMLNSHRKFHSSVYQYRCADCDYATKYCHSFKL.

C2H2-type zinc fingers lie at residues 1–3, 9–31, and 37–54; these read RKH, FQCD…RKFH, and YRCA…SFKL.

This sequence belongs to the hunchback C2H2-type zinc-finger protein family.

Its subcellular location is the nucleus. Its function is as follows. Gap class segmentation protein that controls development of head structures. This chain is Protein hunchback (hb), found in Calliphora vicina (Blue blowfly).